The following is a 2492-amino-acid chain: Transcriptional regulator ATRX (2492 aa).

The disordered stretch occupies residues 1–146 (MTAEPMSESK…DKDDFKGPEF (146 aa)). A Glycyl lysine isopeptide (Lys-Gly) (interchain with G-Cter in SUMO2) cross-link involves residue K10. Residues 17 to 27 (KLHDFLAHSSE) are compositionally biased toward basic and acidic residues. 2 positions are modified to phosphoserine: S25 and S34. Residues 40-57 (MNQNTDKISGSGSNSDMM) show a composition bias toward polar residues. The span at 58–72 (ENSKEEGTSSSEKSK) shows a compositional bias: basic and acidic residues. Y89 carries the post-translational modification Phosphotyrosine. Phosphoserine occurs at positions 92 and 112. The span at 92–108 (SDDEKPLDDETVNEDAS) shows a compositional bias: acidic residues. Residues 135-146 (NEDKDDFKGPEF) are compositionally biased toward basic and acidic residues. Glycyl lysine isopeptide (Lys-Gly) (interchain with G-Cter in SUMO2) cross-links involve residues K138 and K142. The ADD domain occupies 159–296 (KRGEDGLHGI…LEQLLQQNKK (138 aa)). Residues 170–206 (SCTACGQQVNHFQKDSIYRHPSLQVLICKNCFKYYMS) form a GATA-type; atypical zinc finger. Phosphoserine is present on S213. Residues 217-272 (DEQCRWCAEGGNLICCDFCHNAFCKKCILRNLGRKELSTIMDENNQWYCYICHPEP) form a PHD-type; atypical zinc finger. Residue K299 forms a Glycyl lysine isopeptide (Lys-Gly) (interchain with G-Cter in SUMO2) linkage. S316 carries the phosphoserine modification. A Glycyl lysine isopeptide (Lys-Gly) (interchain with G-Cter in SUMO2) cross-link involves residue K438. Composition is skewed to basic and acidic residues over residues 457–473 (ISKSEAKLSRKQVDSEH) and 481–502 (EEQRANKSTGGEHKKSDRKEEP). The segment at 457 to 581 (ISKSEAKLSR…GGIKSKTTAK (125 aa)) is disordered. Low complexity predominate over residues 557-567 (ESSSVKLSISS). The PxVxL motif signature appears at 581-594 (KVTKELYVKLTPVS). T591 is subject to Phosphothreonine. The interval 593-619 (VSLSNSPIKGADCQEVPQDKDGYKSCG) is disordered. Phosphoserine is present on residues S594 and S598. Residue K623 forms a Glycyl lysine isopeptide (Lys-Gly) (interchain with G-Cter in SUMO1); alternate linkage. A Glycyl lysine isopeptide (Lys-Gly) (interchain with G-Cter in SUMO2); alternate cross-link involves residue K623. S634 bears the Phosphoserine mark. The segment at 652 to 949 (DLRRSPRVKT…AETKEKSKHL (298 aa)) is disordered. The residue at position 674 (T674) is a Phosphothreonine. Phosphoserine is present on residues S675, S677, S729, and S731. The segment covering 755 to 777 (NEIHTNHKTLYDLKTQAGKDDKG) has biased composition (basic and acidic residues). Residues S784, S819, S849, S850, S875, and S876 each carry the phosphoserine modification. The span at 843–864 (NTKDFDSSEDEKHSKKGMDNQG) shows a compositional bias: basic and acidic residues. Residues 878–887 (DAERKQEREN) are compositionally biased toward basic and acidic residues. A Phosphoserine modification is found at S889. Basic and acidic residues-rich tracts occupy residues 894–909 (TVDKDTTIMELRDRLP) and 920–944 (GVDKLSGKEEGFTSLEVRKVAETKE). S962 carries the post-translational modification Phosphoserine. K967 carries the post-translational modification N6-acetyllysine. Over residues 967 to 1004 (KFLKKDQSDETSEDDKKQSKKGTEEKKKTSDFKKKVIK) the composition is skewed to basic and acidic residues. The interval 967–1479 (KFLKKDQSDE…SKSPGKGRKK (513 aa)) is disordered. S974 is subject to Phosphoserine. T977 carries the phosphothreonine modification. Residue K1004 forms a Glycyl lysine isopeptide (Lys-Gly) (interchain with G-Cter in SUMO2) linkage. S1011, S1012, and S1013 each carry phosphoserine. A compositionally biased stretch (basic and acidic residues) spans 1015–1027 (GTEKLPEREEICH). Residues 1045 to 1055 (KNKKIRDKTSK) show a composition bias toward basic residues. 2 stretches are compositionally biased toward basic and acidic residues: residues 1056–1082 (KKDELSDYAEKSTGKGDSCDSSEDKKS) and 1103–1139 (KRQDCSSSDTEKYSMKEDGCNSSDKRLKRIELRERRN). S1061 carries the phosphoserine modification. At Y1063 the chain carries Phosphotyrosine. Basic residues predominate over residues 1167 to 1195 (KKKQRTSSKKKAVIVKEKKRNSLRTSTKR). Residues 1189–1326 (LRTSTKRKQA…KNQVNSESDS (138 aa)) are interaction with DAXX. Polar residues predominate over residues 1233–1246 (LVLSSHTGFCQSSG). 3 positions are modified to phosphoserine: S1244, S1245, and S1253. Residues 1267-1281 (PENRIAKKMLLEEIK) show a composition bias toward basic and acidic residues. Residues 1286–1297 (SDEDGSSDDEPE) show a composition bias toward acidic residues. The span at 1298–1308 (EGKKRTGKQNE) shows a compositional bias: basic and acidic residues. Residues S1322, S1324, and S1326 each carry the phosphoserine modification. Basic residues predominate over residues 1334–1345 (PRYRHRLLRHKL). Phosphoserine is present on residues S1348 and S1352. 2 stretches are compositionally biased toward basic and acidic residues: residues 1353-1368 (GEEKKTKPKEHKEVKG) and 1408-1417 (KKAELEENQR). A compositionally biased stretch (basic residues) spans 1419-1428 (YKQKKKRRRI). The span at 1443-1468 (EEEEEEKEEEEEEEEEEEEEEEDEND) shows a compositional bias: acidic residues. K1488 participates in a covalent cross-link: Glycyl lysine isopeptide (Lys-Gly) (interchain with G-Cter in SUMO2). A Phosphoserine modification is found at S1527. The residue at position 1529 (T1529) is a Phosphothreonine. A Helicase ATP-binding domain is found at 1581-1768 (KTKKSPGSGC…HCMVNFIKEN (188 aa)). 1594-1601 (HCMGLGKT) is a binding site for ATP. The DEGH box signature appears at 1719–1722 (DEGH). Phosphoserine is present on residues S1906 and S1913. The segment at 1913–2000 (SDSDETSMSL…SSNPSSPAPD (88 aa)) is disordered. Over residues 1929–1938 (KKKKKGKKGK) the composition is skewed to basic residues. Residue K1982 forms a Glycyl lysine isopeptide (Lys-Gly) (interchain with G-Cter in SUMO1); alternate linkage. Residue K1982 forms a Glycyl lysine isopeptide (Lys-Gly) (interchain with G-Cter in SUMO2); alternate linkage. K1987 participates in a covalent cross-link: Glycyl lysine isopeptide (Lys-Gly) (interchain with G-Cter in SUMO2). A compositionally biased stretch (low complexity) spans 1990 to 1999 (SSSNPSSPAP). A phosphoserine mark is found at S1992 and S1996. An interaction with MECP2 region spans residues 2010-2280 (DAEVLEHSGK…RKAAWAEYEA (271 aa)). The Helicase C-terminal domain maps to 2025-2205 (EILRMAEEIG…ERHFTMNELT (181 aa)). At S2220 the chain carries Phosphoserine. Positions 2462–2492 (PVAGGMQPPPLQRAPPPMRSKNPGPSQGKSM) are disordered. The span at 2468 to 2479 (QPPPLQRAPPPM) shows a compositional bias: pro residues. An omega-N-methylarginine mark is found at R2474 and R2480.

This sequence belongs to the SNF2/RAD54 helicase family. As to quaternary structure, interacts with DAXX to form the chromatin remodeling complex ATRX:DAXX. Probably binds EZH2. Binds annexin V in a calcium and phosphatidylcholine/phosphatidylserine-dependent manner. Interacts directly with CBX5 via the PxVxL motif. Interacts with RAD50, MRE11 and NBN; indicative for an association with the MRN complex. Interacts with histone MACROH2A1. Interacts with histone H3 peptides methylated at 'Lys-10' with preferences H3K9me3 &gt; H3K9me2 &gt; H3K9me1. Interacts with histone H3 peptides unmethylated at 'Lys-5' (H3K4me0). Interacts with MECP2, SMC1 and SMC3. Interacts with SETDB1, TRIM28 and ZNF274.

The protein resides in the nucleus. The protein localises to the chromosome. It localises to the telomere. It is found in the PML body. The enzyme catalyses ATP + H2O = ADP + phosphate + H(+). Functionally, involved in transcriptional regulation and chromatin remodeling. Facilitates DNA replication in multiple cellular environments and is required for efficient replication of a subset of genomic loci. Binds to DNA tandem repeat sequences in both telomeres and euchromatin and in vitro binds DNA quadruplex structures. May help stabilizing G-rich regions into regular chromatin structures by remodeling G4 DNA and incorporating H3.3-containing nucleosomes. Catalytic component of the chromatin remodeling complex ATRX:DAXX which has ATP-dependent DNA translocase activity and catalyzes the replication-independent deposition of histone H3.3 in pericentric DNA repeats outside S-phase and telomeres, and the in vitro remodeling of H3.3-containing nucleosomes. Its heterochromatin targeting is proposed to involve a combinatorial readout of histone H3 modifications (specifically methylation states of H3K9 and H3K4) and association with CBX5. Involved in maintaining telomere structural integrity in embryonic stem cells which probably implies recruitment of CBX5 to telomeres. May be involved in transcriptional regulation of telomeric repeat-containing RNA (TERRA). Acts as a negative regulator of chromatin incorporation of transcriptionally repressive histone MACROH2A1, particularily at telomeres. Participates in the allele-specific gene expression at the imprinted IGF2/H19 gene locus. On the maternal allele, required for the chromatin occupancy of SMC1 and CTCTF within the H19 imprinting control region (ICR) and involved in esatblishment of histone tails modifications in the ICR. May be involved in brain development and facial morphogenesis. Binds to zinc-finger coding genes with atypical chromatin signatures and regulates its H3K9me3 levels. Forms a complex with ZNF274, TRIM28 and SETDB1 to facilitate the deposition and maintenance of H3K9me3 at the 3' exons of zinc-finger genes. In Pongo pygmaeus (Bornean orangutan), this protein is Transcriptional regulator ATRX (ATRX).